Reading from the N-terminus, the 131-residue chain is MRHRHGLRKLNRTSSHRLAMLRNMSNSLIEHEVIKTTLPKAKELRKVVEPLITLGKKPSLANRRLAFNRLRDRDSVAKLFDVLGPRFANRPGGYLRVLKFGFRVGDNAPMALVELLDRPEVDETENVQEAE.

The protein belongs to the bacterial ribosomal protein bL17 family. In terms of assembly, part of the 50S ribosomal subunit. Contacts protein L32.

The sequence is that of Large ribosomal subunit protein bL17 from Burkholderia ambifaria (strain MC40-6).